The following is a 275-amino-acid chain: Hydroxyethylthiazole kinase (275 aa).

Residue Met-50 coordinates substrate. ATP contacts are provided by Arg-126 and Ser-171. Ala-200 is a substrate binding site.

This sequence belongs to the Thz kinase family. Requires Mg(2+) as cofactor.

It catalyses the reaction 5-(2-hydroxyethyl)-4-methylthiazole + ATP = 4-methyl-5-(2-phosphooxyethyl)-thiazole + ADP + H(+). It functions in the pathway cofactor biosynthesis; thiamine diphosphate biosynthesis; 4-methyl-5-(2-phosphoethyl)-thiazole from 5-(2-hydroxyethyl)-4-methylthiazole: step 1/1. In terms of biological role, catalyzes the phosphorylation of the hydroxyl group of 4-methyl-5-beta-hydroxyethylthiazole (THZ). This Acinetobacter baumannii (strain ATCC 17978 / DSM 105126 / CIP 53.77 / LMG 1025 / NCDC KC755 / 5377) protein is Hydroxyethylthiazole kinase.